Consider the following 241-residue polypeptide: Small ribosomal subunit protein uS3 (241 aa).

The region spanning 39-108 (IREGVLKLLK…NLKVEVKVIE (70 aa)) is the KH type-2 domain. The interval 215–241 (SQRVSEKAPMNNDRRFNNKNNNRGGRK) is disordered. Residues 232–241 (NKNNNRGGRK) are compositionally biased toward low complexity.

The protein belongs to the universal ribosomal protein uS3 family. In terms of assembly, part of the 30S ribosomal subunit. Forms a tight complex with proteins S10 and S14.

In terms of biological role, binds the lower part of the 30S subunit head. Binds mRNA in the 70S ribosome, positioning it for translation. The chain is Small ribosomal subunit protein uS3 from Mesoplasma florum (strain ATCC 33453 / NBRC 100688 / NCTC 11704 / L1) (Acholeplasma florum).